The chain runs to 435 residues: Glutamate-1-semialdehyde 2,1-aminomutase (435 aa).

N6-(pyridoxal phosphate)lysine is present on K270.

Belongs to the class-III pyridoxal-phosphate-dependent aminotransferase family. HemL subfamily. As to quaternary structure, homodimer. The cofactor is pyridoxal 5'-phosphate.

It localises to the cytoplasm. It carries out the reaction (S)-4-amino-5-oxopentanoate = 5-aminolevulinate. The protein operates within porphyrin-containing compound metabolism; protoporphyrin-IX biosynthesis; 5-aminolevulinate from L-glutamyl-tRNA(Glu): step 2/2. The polypeptide is Glutamate-1-semialdehyde 2,1-aminomutase (Wigglesworthia glossinidia brevipalpis).